Reading from the N-terminus, the 571-residue chain is Urease subunit alpha (571 aa).

The Urease domain maps to 131–571 (GGIDAHIHFI…LPMAQRYFLF (441 aa)). Residues His-136, His-138, and Lys-219 each contribute to the Ni(2+) site. Lys-219 carries the N6-carboxylysine modification. His-221 is a binding site for substrate. Positions 248 and 274 each coordinate Ni(2+). His-322 serves as the catalytic Proton donor. Asp-362 serves as a coordination point for Ni(2+).

The protein belongs to the metallo-dependent hydrolases superfamily. Urease alpha subunit family. In terms of assembly, heterotrimer of UreA (gamma), UreB (beta) and UreC (alpha) subunits. Three heterotrimers associate to form the active enzyme. Requires Ni cation as cofactor. In terms of processing, carboxylation allows a single lysine to coordinate two nickel ions.

It localises to the cytoplasm. The enzyme catalyses urea + 2 H2O + H(+) = hydrogencarbonate + 2 NH4(+). It participates in nitrogen metabolism; urea degradation; CO(2) and NH(3) from urea (urease route): step 1/1. The protein is Urease subunit alpha of Nostoc punctiforme (strain ATCC 29133 / PCC 73102).